The chain runs to 248 residues: MTTMGEDEAPALPKKSPLPEKIDEADVDDDPDDKVIKIVVVGDGASGKTSICQRFAKESFDKSYHQTLGLDFFSRRITLPHEMQVLVQVWDIGGQSIAGEMIDKYLTGANIVFLVYDVTNSKSFENAVDWLSVVKKNTKSSETPVKLVLMGNKTDLEERRVVSVEAHKNFATSNDMMPTYVSAKTGDTVFLTFRQAVAEVLNVGLSRAEVEADIEIVQGSVIEQPKQSDASYARRSDQSRSTSVCSIT.

The interval Met1–Asp30 is disordered. Gly42–Ser50 contacts GTP. An Effector region motif is present at residues Tyr64–Phe72. Residues Asp91 to Gln95, Asn152 to Asp155, and Ser182 to Lys184 contribute to the GTP site. Residues Gln227–Thr248 form a disordered region. The span at Ser239–Thr248 shows a compositional bias: polar residues.

It belongs to the small GTPase superfamily. Rab family. As to expression, expressed in amphid and phasmid ciliated sensory neurons.

The protein resides in the cell projection. The protein localises to the cilium membrane. It localises to the perikaryon. Its subcellular location is the cytoplasm. It is found in the cytoskeleton. The protein resides in the cilium axoneme. Functionally, GTPase. Intraflagellar transport (IFT) cargo that undergoes bidirectional IFT along the ciliary axoneme when in active GTP-bound state in amphid and phasmid ciliated sensory neurons. Targeting and function as IFT cargo may depend on the BBSome, an IFT cargo adapter. Does not undergo IFT when in inactive GDP-bound state. May in turn play a role in cilium structure and/or function in ciliated sensory neurons. The protein is Ras-related protein Rab-28 of Caenorhabditis elegans.